Here is a 326-residue protein sequence, read N- to C-terminus: 5,10-methylenetetrahydromethanopterin reductase (326 aa).

This sequence belongs to the mer family.

It localises to the cytoplasm. The enzyme catalyses 5-methyl-5,6,7,8-tetrahydromethanopterin + oxidized coenzyme F420-(gamma-L-Glu)(n) + H(+) = 5,10-methylenetetrahydromethanopterin + reduced coenzyme F420-(gamma-L-Glu)(n). Its pathway is one-carbon metabolism; methanogenesis from CO(2); methyl-coenzyme M from 5,10-methylene-5,6,7,8-tetrahydromethanopterin: step 1/2. Functionally, catalyzes the reversible reduction of methylene-H(4)MPT to methyl-H(4)MPT. This chain is 5,10-methylenetetrahydromethanopterin reductase, found in Methanolobus tindarius.